A 148-amino-acid chain; its full sequence is Deoxyuridine 5'-triphosphate nucleotidohydrolase (148 aa).

It belongs to the dUTPase family. Mg(2+) is required as a cofactor.

It catalyses the reaction dUTP + H2O = dUMP + diphosphate + H(+). The protein operates within pyrimidine metabolism; dUMP biosynthesis; dUMP from dCTP (dUTP route): step 2/2. In terms of biological role, this enzyme decreases the intracellular concentration of dUTP so that uracil cannot be incorporated into viral progeny DNA. This activity is sufficient to exclude uracil from the DNA during phage replication. In the case of dUTPase mutant phages, the host dUTPase activity is not sufficient to exclude uracil from T5 DNA and uracil are incorporated, leading to decreased phage viability. The polypeptide is Deoxyuridine 5'-triphosphate nucleotidohydrolase (DUT) (Escherichia coli (Enterobacteria phage T5)).